The primary structure comprises 1032 residues: Exportin-T (1032 aa).

The protein belongs to the exportin family.

The protein localises to the nucleus. It is found in the cytoplasm. Functionally, tRNA nucleus export receptor which facilitates tRNA translocation across the nuclear pore complex. Involved in pre-tRNA splicing, probably by affecting the interaction of pre-tRNA with splicing endonuclease. This chain is Exportin-T (los1), found in Aspergillus fumigatus (strain ATCC MYA-4609 / CBS 101355 / FGSC A1100 / Af293) (Neosartorya fumigata).